The following is a 252-amino-acid chain: 4-formylbenzenesulfonate dehydrogenase TsaC1/TsaC2 (252 aa).

Residues 9-36 and Asp-62 contribute to the NAD(+) site; that span reads IVTG…LVAD. Position 142 (Ser-142) interacts with substrate. The active-site Proton acceptor is the Tyr-155. Residue Lys-159 participates in NAD(+) binding.

This sequence belongs to the short-chain dehydrogenases/reductases (SDR) family. In terms of assembly, homodimer.

It catalyses the reaction 4-formylbenzenesulfonate + NAD(+) + H2O = 4-sulfobenzoate + NADH + 2 H(+). Involved in the toluene-4-sulfonate degradation pathway. Does not discriminate between the sulfonate and the carboxyl substituents and can also be involved in the p-toluenecarboxylate degradation pathway. The chain is 4-formylbenzenesulfonate dehydrogenase TsaC1/TsaC2 (tsaC1) from Comamonas testosteroni (Pseudomonas testosteroni).